The sequence spans 205 residues: Ypt/Rab-type GTPase Rab7 (205 aa).

GTP contacts are provided by residues 17–23 (SGVGKTS), 33–40 (FSASYKAT), Gly-66, 125–128 (NKID), and 157–159 (SAK). The Effector region signature appears at 37–45 (YKATIGADF). 2 S-geranylgeranyl cysteine lipidation sites follow: Cys-203 and Cys-205. Cysteine methyl ester is present on Cys-205.

This sequence belongs to the small GTPase superfamily. Rab family.

Its subcellular location is the cell membrane. Alternates between an inactive form bound to GDP and an active form bound to GTP. Activated by guanine nucleotide-exchange factors (GEFs), and inactivated by GTPase-activating proteins (GAPs). In terms of biological role, ypt/Rab-type GTPases are key regulators of membrane trafficking and intracellular vesicular transport. They act as molecular switches that convert between GTP-bound and GDP-bound states, and regulate virtually all steps of membrane traffic from the formation of the transport vesicle at the donor membrane to its fusion at the target membrane. In the GDP-bound state, Ypt proteins are predominantly cytosolic, solubilized through the interaction with a GDP dissociation inhibitor (GDI). In the GTP-bound state, the proteins are membrane bound and interact with specific effector proteins that select cargo, promote vesicle movement, or verify the correct site of fusion. The protein is Ypt/Rab-type GTPase Rab7 (gtp-14) of Neurospora crassa (strain ATCC 24698 / 74-OR23-1A / CBS 708.71 / DSM 1257 / FGSC 987).